We begin with the raw amino-acid sequence, 89 residues long: Small ribosomal subunit protein uS15 (89 aa).

It belongs to the universal ribosomal protein uS15 family. Part of the 30S ribosomal subunit. Forms a bridge to the 50S subunit in the 70S ribosome, contacting the 23S rRNA.

In terms of biological role, one of the primary rRNA binding proteins, it binds directly to 16S rRNA where it helps nucleate assembly of the platform of the 30S subunit by binding and bridging several RNA helices of the 16S rRNA. Its function is as follows. Forms an intersubunit bridge (bridge B4) with the 23S rRNA of the 50S subunit in the ribosome. The protein is Small ribosomal subunit protein uS15 of Maridesulfovibrio salexigens (strain ATCC 14822 / DSM 2638 / NCIMB 8403 / VKM B-1763) (Desulfovibrio salexigens).